Consider the following 363-residue polypeptide: 3,4-dihydroxy-2-butanone 4-phosphate synthase (363 aa).

Positions 1-202 (MSHISPIPEI…IADLIEYRSR (202 aa)) are DHBP synthase. D-ribulose 5-phosphate-binding positions include 28 to 29 (RE), Asp-33, 141 to 145 (RAGHT), and Glu-165. Glu-29 lines the Mg(2+) pocket. Position 144 (His-144) interacts with Mg(2+). A GTP cyclohydrolase II-like region spans residues 205-363 (SLLEDMGNAP…EVVGFEEAEK (159 aa)).

The protein in the N-terminal section; belongs to the DHBP synthase family. In the C-terminal section; belongs to the GTP cyclohydrolase II family. Mg(2+) serves as cofactor. Mn(2+) is required as a cofactor.

It carries out the reaction D-ribulose 5-phosphate = (2S)-2-hydroxy-3-oxobutyl phosphate + formate + H(+). It functions in the pathway cofactor biosynthesis; riboflavin biosynthesis; 2-hydroxy-3-oxobutyl phosphate from D-ribulose 5-phosphate: step 1/1. Functionally, catalyzes the conversion of D-ribulose 5-phosphate to formate and 3,4-dihydroxy-2-butanone 4-phosphate. This is 3,4-dihydroxy-2-butanone 4-phosphate synthase (ribB) from Neisseria meningitidis serogroup B (strain ATCC BAA-335 / MC58).